Reading from the N-terminus, the 561-residue chain is Probable xyloglucan galactosyltransferase GT20 (561 aa).

The Cytoplasmic portion of the chain corresponds to 1–31 (MVSKRKSRTSKTIEDSCIHLCSVFFRFLYYT). Residues 32–52 (LPALFLFFFLLYLCLSFTTGI) traverse the membrane as a helical; Signal-anchor for type II membrane protein segment. Topologically, residues 53–561 (SYNNFHMCIF…LLKKINRSVV (509 aa)) are lumenal. Residues Asn-87, Asn-253, Asn-277, Asn-418, Asn-421, and Asn-557 are each glycosylated (N-linked (GlcNAc...) asparagine).

It belongs to the glycosyltransferase 47 family. Expressed in hydathodes.

It localises to the golgi apparatus membrane. Functions in xyloglucan synthesis by adding side chains to the xylosylated glucan backbone. Involved in the galactosylation of hemicellulose xyloglucan. This Arabidopsis thaliana (Mouse-ear cress) protein is Probable xyloglucan galactosyltransferase GT20.